A 135-amino-acid polypeptide reads, in one-letter code: MSSIGGKLQKSLHKIRAGALGIPLPKHIQEVSIQYSLDSRLGHMGAKKFVKECLPSLYYNNYGLKFNVNHRLPNDQTPTFSIISNNKVIYSYDMRSKQLETISSDIQKALKELHHESSPENIKEAHKQDYSPPSN.

Residues 114–129 are compositionally biased toward basic and acidic residues; it reads HHESSPENIKEAHKQD. The interval 114-135 is disordered; it reads HHESSPENIKEAHKQDYSPPSN.

The protein belongs to the mitochondrion-specific ribosomal protein mL61 family. Component of the mitochondrial large ribosomal subunit (mt-LSU). Mature yeast 74S mitochondrial ribosomes consist of a small (37S) and a large (54S) subunit. The 37S small subunit contains a 15S ribosomal RNA (15S mt-rRNA) and at least 32 different proteins. The 54S large subunit contains a 21S rRNA (21S mt-rRNA) and at least 45 different proteins.

Its subcellular location is the mitochondrion. Component of the mitochondrial ribosome (mitoribosome), a dedicated translation machinery responsible for the synthesis of mitochondrial genome-encoded proteins, including at least some of the essential transmembrane subunits of the mitochondrial respiratory chain. The mitoribosomes are attached to the mitochondrial inner membrane and translation products are cotranslationally integrated into the membrane. mL61 is not essential in cells grown at 30 degrees Celsius but is required for mitochondrial translation in cells grown at 18 degrees Celsius. The sequence is that of Large ribosomal subunit protein mL61 (mrp49) from Schizosaccharomyces pombe (strain 972 / ATCC 24843) (Fission yeast).